A 174-amino-acid chain; its full sequence is NADH-quinone oxidoreductase subunit B 1 (174 aa).

[4Fe-4S] cluster is bound by residues Cys-53, Cys-54, Cys-118, and Cys-148.

It belongs to the complex I 20 kDa subunit family. In terms of assembly, NDH-1 is composed of 14 different subunits. Subunits NuoB, C, D, E, F, and G constitute the peripheral sector of the complex. It depends on [4Fe-4S] cluster as a cofactor.

The protein localises to the cell inner membrane. The catalysed reaction is a quinone + NADH + 5 H(+)(in) = a quinol + NAD(+) + 4 H(+)(out). NDH-1 shuttles electrons from NADH, via FMN and iron-sulfur (Fe-S) centers, to quinones in the respiratory chain. The immediate electron acceptor for the enzyme in this species is believed to be ubiquinone. Couples the redox reaction to proton translocation (for every two electrons transferred, four hydrogen ions are translocated across the cytoplasmic membrane), and thus conserves the redox energy in a proton gradient. The protein is NADH-quinone oxidoreductase subunit B 1 of Cereibacter sphaeroides (strain KD131 / KCTC 12085) (Rhodobacter sphaeroides).